The sequence spans 754 residues: Probable galactinol--sucrose galactosyltransferase 1 (754 aa).

It belongs to the glycosyl hydrolases 36 family.

The catalysed reaction is alpha-D-galactosyl-(1-&gt;3)-1D-myo-inositol + sucrose = raffinose + myo-inositol. In terms of biological role, transglycosidase operating by a ping-pong reaction mechanism. Involved in the synthesis of raffinose, a major soluble carbohydrate in seeds, roots and tubers. The polypeptide is Probable galactinol--sucrose galactosyltransferase 1 (RFS1) (Arabidopsis thaliana (Mouse-ear cress)).